Consider the following 566-residue polypeptide: MTAETNTNKHPLYIPYAGYTLLELPLLNKGSAFTQEERSHFNLHGLIPHVIETIEEQSQRSYQQYGAFNDDINKHIYLRNIQDTNETLFYRLINDHLEEMMPIIYTPTVGEACQRFSDIYRRHRGIFISYPDREHIDDILQNVSKRNVKVIVITDGERILGLGDQGIGGMGIPIGKLSLYTACGGISPAYTLPITIDVGTNNQQLLNDPIYMGWRQPRISGDEYYEFIDQVLTGIRRRWPHALIQFEDFAQKNAMPLLTKYRDKFCCFNDDIQGTAAVSVGSLIAASRAAGKQLKDQTITFLGAGSAGCGIAEQIVAQMVAEGLTDAQARARVYMVDRFGLITENQPNLLDFQRKLAQKAEVVSDWGNVEEVISLLDVVKNAKPTVLIGVSGQPGLFTEEVIRTLAENCERPIVMPLSNPTSRVEALPSDVIQWTNGRALIATGSPFAPVNYQGKLYNISQCNNSYIFPGIGLGVIASGAKRVTDNMLMASSNALADCSPLLQNPNADLLPAIADIQDVSKRIAFKVAKAAIEDGVALNMSDEVLLQNIEKEFWKPKYRGYKRVPF.

Tyr105 serves as the catalytic Proton donor. Residue Arg158 participates in NAD(+) binding. The active-site Proton acceptor is the Lys176. A divalent metal cation contacts are provided by Glu247, Asp248, and Asp271. The NAD(+) site is built by Asp271 and Asn419.

Belongs to the malic enzymes family. As to quaternary structure, homotetramer. The cofactor is Mg(2+). Mn(2+) is required as a cofactor.

The enzyme catalyses (S)-malate + NAD(+) = pyruvate + CO2 + NADH. It carries out the reaction oxaloacetate + H(+) = pyruvate + CO2. This chain is NAD-dependent malic enzyme, found in Acinetobacter baylyi (strain ATCC 33305 / BD413 / ADP1).